The primary structure comprises 168 residues: Lipoprotein signal peptidase (168 aa).

3 helical membrane passes run 8-28, 61-81, and 91-111; these read LYYL…WLVV, GQFW…VIYI, and FGIA…DRIF. Active-site residues include Asp-117 and Asp-135. The chain crosses the membrane as a helical span at residues 128-148; it reads FPIFNVADAALTIGVALMFIY.

It belongs to the peptidase A8 family.

The protein localises to the cell membrane. It carries out the reaction Release of signal peptides from bacterial membrane prolipoproteins. Hydrolyzes -Xaa-Yaa-Zaa-|-(S,diacylglyceryl)Cys-, in which Xaa is hydrophobic (preferably Leu), and Yaa (Ala or Ser) and Zaa (Gly or Ala) have small, neutral side chains.. Its pathway is protein modification; lipoprotein biosynthesis (signal peptide cleavage). Functionally, this protein specifically catalyzes the removal of signal peptides from prolipoproteins. The sequence is that of Lipoprotein signal peptidase from Anoxybacillus flavithermus (strain DSM 21510 / WK1).